The chain runs to 157 residues: 2-C-methyl-D-erythritol 2,4-cyclodiphosphate synthase (157 aa).

The a divalent metal cation site is built by Asp8 and His10. 4-CDP-2-C-methyl-D-erythritol 2-phosphate is bound by residues 8-10 (DVH) and 34-35 (HS). An a divalent metal cation-binding site is contributed by His42. Residues 56 to 58 (DIG), 61 to 65 (FPDNE), 132 to 135 (TTTE), Phe139, and Arg142 each bind 4-CDP-2-C-methyl-D-erythritol 2-phosphate.

Belongs to the IspF family. As to quaternary structure, homotrimer. Requires a divalent metal cation as cofactor.

It carries out the reaction 4-CDP-2-C-methyl-D-erythritol 2-phosphate = 2-C-methyl-D-erythritol 2,4-cyclic diphosphate + CMP. The protein operates within isoprenoid biosynthesis; isopentenyl diphosphate biosynthesis via DXP pathway; isopentenyl diphosphate from 1-deoxy-D-xylulose 5-phosphate: step 4/6. Involved in the biosynthesis of isopentenyl diphosphate (IPP) and dimethylallyl diphosphate (DMAPP), two major building blocks of isoprenoid compounds. Catalyzes the conversion of 4-diphosphocytidyl-2-C-methyl-D-erythritol 2-phosphate (CDP-ME2P) to 2-C-methyl-D-erythritol 2,4-cyclodiphosphate (ME-CPP) with a corresponding release of cytidine 5-monophosphate (CMP). The chain is 2-C-methyl-D-erythritol 2,4-cyclodiphosphate synthase from Desulforamulus reducens (strain ATCC BAA-1160 / DSM 100696 / MI-1) (Desulfotomaculum reducens).